The sequence spans 612 residues: Dihydroxy-acid dehydratase (612 aa).

Asp-81 provides a ligand contact to Mg(2+). Position 122 (Cys-122) interacts with [2Fe-2S] cluster. Asp-123 and Lys-124 together coordinate Mg(2+). Position 124 is an N6-carboxylysine (Lys-124). Cys-196 is a binding site for [2Fe-2S] cluster. Glu-492 is a Mg(2+) binding site. Ser-518 (proton acceptor) is an active-site residue.

This sequence belongs to the IlvD/Edd family. In terms of assembly, homodimer. [2Fe-2S] cluster is required as a cofactor. Mg(2+) serves as cofactor.

It carries out the reaction (2R)-2,3-dihydroxy-3-methylbutanoate = 3-methyl-2-oxobutanoate + H2O. The catalysed reaction is (2R,3R)-2,3-dihydroxy-3-methylpentanoate = (S)-3-methyl-2-oxopentanoate + H2O. It participates in amino-acid biosynthesis; L-isoleucine biosynthesis; L-isoleucine from 2-oxobutanoate: step 3/4. Its pathway is amino-acid biosynthesis; L-valine biosynthesis; L-valine from pyruvate: step 3/4. Its function is as follows. Functions in the biosynthesis of branched-chain amino acids. Catalyzes the dehydration of (2R,3R)-2,3-dihydroxy-3-methylpentanoate (2,3-dihydroxy-3-methylvalerate) into 2-oxo-3-methylpentanoate (2-oxo-3-methylvalerate) and of (2R)-2,3-dihydroxy-3-methylbutanoate (2,3-dihydroxyisovalerate) into 2-oxo-3-methylbutanoate (2-oxoisovalerate), the penultimate precursor to L-isoleucine and L-valine, respectively. The polypeptide is Dihydroxy-acid dehydratase (Cereibacter sphaeroides (strain ATCC 17029 / ATH 2.4.9) (Rhodobacter sphaeroides)).